The primary structure comprises 220 residues: Photosynthetic NDH subunit of lumenal location 3, chloroplastic (220 aa).

The N-terminal 35 residues, 1–35, are a transit peptide targeting the chloroplast; the sequence is MAHFIDLNSLTNTLPSLPKLPESRKTGKSSGFACR. A thylakoid-targeting transit peptide spans 36–77; sequence RTEEFQEPDSVQITRRMTLGFAVSIGLTGILGENNVSLAQDN.

Belongs to the PsbQ family. In terms of assembly, part of the chloroplast NDH complex, composed of a mixture of chloroplast and nucleus encoded subunits. Component of the NDH lumenal subcomplex, at least composed of PnsL1, PnsL2, PnsL3, PnsL4 and PnsL5.

The protein resides in the plastid. The protein localises to the chloroplast thylakoid membrane. Its function is as follows. NDH shuttles electrons from NAD(P)H:plastoquinone, via FMN and iron-sulfur (Fe-S) centers, to quinones in the photosynthetic chain and possibly in a chloroplast respiratory chain. The immediate electron acceptor for the enzyme in this species is believed to be plastoquinone. Couples the redox reaction to proton translocation, and thus conserves the redox energy in a proton gradient. Required for both formation and activity of the chloroplast NAD(P)H dehydrogenase (NDH) complex. This is Photosynthetic NDH subunit of lumenal location 3, chloroplastic from Arabidopsis thaliana (Mouse-ear cress).